The sequence spans 129 residues: UPF0344 protein SAR0931 (129 aa).

Transmembrane regions (helical) follow at residues 1 to 21, 36 to 56, 67 to 87, and 99 to 119; these read MLHLHILSWVLAIILFIATYL, LHMVLRLFMLLTLISGFWILI, MLLTLKMLCGVAVVGLMEVSI, and MFWITIALIIITMVLGVILPL.

This sequence belongs to the UPF0344 family.

It is found in the cell membrane. The chain is UPF0344 protein SAR0931 from Staphylococcus aureus (strain MRSA252).